The chain runs to 483 residues: UDP-N-acetylmuramoyl-L-alanyl-D-glutamate--2,6-diaminopimelate ligase (483 aa).

A UDP-N-acetyl-alpha-D-muramoyl-L-alanyl-D-glutamate-binding site is contributed by Ser-30. 109-115 (GTNGKTT) is a binding site for ATP. UDP-N-acetyl-alpha-D-muramoyl-L-alanyl-D-glutamate-binding positions include 151-152 (TT), Ser-178, and Arg-186. At Lys-218 the chain carries N6-carboxylysine. Meso-2,6-diaminopimelate contacts are provided by residues Arg-380, 403–406 (DNPR), Gly-453, and Glu-457. The Meso-diaminopimelate recognition motif motif lies at 403–406 (DNPR).

This sequence belongs to the MurCDEF family. MurE subfamily. It depends on Mg(2+) as a cofactor. In terms of processing, carboxylation is probably crucial for Mg(2+) binding and, consequently, for the gamma-phosphate positioning of ATP.

Its subcellular location is the cytoplasm. It catalyses the reaction UDP-N-acetyl-alpha-D-muramoyl-L-alanyl-D-glutamate + meso-2,6-diaminopimelate + ATP = UDP-N-acetyl-alpha-D-muramoyl-L-alanyl-gamma-D-glutamyl-meso-2,6-diaminopimelate + ADP + phosphate + H(+). The protein operates within cell wall biogenesis; peptidoglycan biosynthesis. Catalyzes the addition of meso-diaminopimelic acid to the nucleotide precursor UDP-N-acetylmuramoyl-L-alanyl-D-glutamate (UMAG) in the biosynthesis of bacterial cell-wall peptidoglycan. In Chlamydia muridarum (strain MoPn / Nigg), this protein is UDP-N-acetylmuramoyl-L-alanyl-D-glutamate--2,6-diaminopimelate ligase.